A 383-amino-acid chain; its full sequence is Glutamyl-tRNA reductase (383 aa).

Substrate contacts are provided by residues 38 to 41, Ser-82, 87 to 89, and Gln-93; these read TCNR and EDQ. Cys-39 acts as the Nucleophile in catalysis. NADP(+) is bound at residue 161–166; that stretch reads GAGEIA.

Belongs to the glutamyl-tRNA reductase family. Homodimer.

The catalysed reaction is (S)-4-amino-5-oxopentanoate + tRNA(Glu) + NADP(+) = L-glutamyl-tRNA(Glu) + NADPH + H(+). It functions in the pathway porphyrin-containing compound metabolism; protoporphyrin-IX biosynthesis; 5-aminolevulinate from L-glutamyl-tRNA(Glu): step 1/2. Its function is as follows. Catalyzes the NADPH-dependent reduction of glutamyl-tRNA(Glu) to glutamate 1-semialdehyde (GSA). The sequence is that of Glutamyl-tRNA reductase from Methanococcus aeolicus (strain ATCC BAA-1280 / DSM 17508 / OCM 812 / Nankai-3).